A 138-amino-acid chain; its full sequence is Small ribosomal subunit protein bS6 (138 aa).

Residues 94–138 form a disordered region; it reads VKQDGPLPTPKPTSKENEPEKEEVKPTEEKTESPSKDEKKEDSKE. Over residues 106 to 138 the composition is skewed to basic and acidic residues; the sequence is TSKENEPEKEEVKPTEEKTESPSKDEKKEDSKE.

This sequence belongs to the bacterial ribosomal protein bS6 family.

Its function is as follows. Binds together with bS18 to 16S ribosomal RNA. The sequence is that of Small ribosomal subunit protein bS6 from Prochlorococcus marinus (strain NATL2A).